Reading from the N-terminus, the 454-residue chain is NADP-specific glutamate dehydrogenase (454 aa).

S2 is modified (N-acetylserine). K114 is a catalytic residue.

This sequence belongs to the Glu/Leu/Phe/Val dehydrogenases family. As to quaternary structure, homohexamer.

It catalyses the reaction L-glutamate + NADP(+) + H2O = 2-oxoglutarate + NH4(+) + NADPH + H(+). This chain is NADP-specific glutamate dehydrogenase (gdh), found in Neurospora crassa (strain ATCC 24698 / 74-OR23-1A / CBS 708.71 / DSM 1257 / FGSC 987).